The sequence spans 254 residues: Protein GVQW3 (254 aa).

The polypeptide is Protein GVQW3 (Homo sapiens (Human)).